Here is a 184-residue protein sequence, read N- to C-terminus: uncharacterized protein (184 aa).

The first 20 residues, 1–20 (MKKQILALVCGVIFSSSTWA), serve as a signal peptide directing secretion.

It to E.coli YtfJ.

The protein localises to the periplasm. This is an uncharacterized protein from Haemophilus influenzae (strain ATCC 51907 / DSM 11121 / KW20 / Rd).